The following is a 431-amino-acid chain: Tyrosine--tRNA ligase (431 aa).

Tyr-34 is an L-tyrosine binding site. The 'HIGH' region signature appears at 39-48; sequence PTADSLHIGH. Positions 171 and 175 each coordinate L-tyrosine. A 'KMSKS' region motif is present at residues 231 to 235; the sequence is KFGKT. Lys-234 provides a ligand contact to ATP. In terms of domain architecture, S4 RNA-binding spans 353–422; sequence INVVEALVKT…GKYTILRRGK (70 aa).

It belongs to the class-I aminoacyl-tRNA synthetase family. TyrS type 1 subfamily. In terms of assembly, homodimer.

It is found in the cytoplasm. The catalysed reaction is tRNA(Tyr) + L-tyrosine + ATP = L-tyrosyl-tRNA(Tyr) + AMP + diphosphate + H(+). Its function is as follows. Catalyzes the attachment of tyrosine to tRNA(Tyr) in a two-step reaction: tyrosine is first activated by ATP to form Tyr-AMP and then transferred to the acceptor end of tRNA(Tyr). This is Tyrosine--tRNA ligase from Neisseria meningitidis serogroup C (strain 053442).